Consider the following 151-residue polypeptide: Internal scaffolding protein VP3 (151 aa).

The interval 120-151 (VETPQQAPQSTTNQTTTKPAPASGEPTPVPTP) is disordered. Polar residues predominate over residues 122–137 (TPQQAPQSTTNQTTTK).

The protein belongs to the microvidae B protein family.

The protein resides in the host cytoplasm. In terms of biological role, participates in the assembly of the viral procapsid in the cytoplasm. Internal scaffolding protein VP3 is released from the procapsid upon genome packaging, possibly through affinity displacement by the protein VP8, or by proteolysis. This chain is Internal scaffolding protein VP3, found in Bdellovibrio bacteriovorus (Bacteriophage phiMH2K).